Reading from the N-terminus, the 116-residue chain is Subtilisin inhibitor-like protein 4 (116 aa).

Intrachain disulfides connect cysteine 38–cysteine 53 and cysteine 74–cysteine 104.

The protein belongs to the protease inhibitor I16 (SSI) family. Homodimer.

Its subcellular location is the secreted. Inhibitor of subtilisin BPN' and trypsin. This Streptomyces lavendulae protein is Subtilisin inhibitor-like protein 4.